The following is a 359-amino-acid chain: Probable RNA methyltransferase RPD_2859 (359 aa).

Residue Glu99 is the Proton acceptor of the active site. Residues Arg105–Arg330 form the Radical SAM core domain. An intrachain disulfide couples Cys112 to Cys336. [4Fe-4S] cluster-binding residues include Cys119, Cys123, and Cys126. Residues Gly162–Glu163, Ser194, Ser217–His219, and Asn293 contribute to the S-adenosyl-L-methionine site. The active-site S-methylcysteine intermediate is Cys336.

Belongs to the radical SAM superfamily. RlmN family. It depends on [4Fe-4S] cluster as a cofactor.

The protein localises to the cytoplasm. In Rhodopseudomonas palustris (strain BisB5), this protein is Probable RNA methyltransferase RPD_2859.